Reading from the N-terminus, the 744-residue chain is Zinc finger protein 483 (744 aa).

The SCAN box domain occupies 52 to 134 (RQRFRWFCYS…TLIEDLTQML (83 aa)). Residues 137–156 (KDPVSQDSTVSQEENSKEDK) form a disordered region. The region spanning 170-241 (ITLKDVAVNF…EEVSKSSRLD (72 aa)) is the KRAB domain. 2 disordered regions span residues 263-308 (ESQQ…SPFG) and 350-385 (KEKTAGEKSRKSNDGGKVLSHSSALTEHQKRQKIHL). Polar residues predominate over residues 277-293 (NQGNSKGRVAQNKTLGS). Composition is skewed to basic and acidic residues over residues 298–308 (KKFDPDKSPFG) and 350–363 (KEKTAGEKSRKSND). 11 consecutive C2H2-type zinc fingers follow at residues 439-461 (HKCSKCGKAFGYSASLTKHRRIH), 467-489 (YMCNECGKAFSDSSSLTPHHRTH), 495-517 (FKCDDCGKGFTLSAHLIKHQRIH), 523-545 (YKCKDCGRPFSDSSSLIQHQRIH), 551-573 (YTCSNCGKSFSHSSSLSKHQRIH), 579-601 (YKCGECGKAFRQNSCLTRHQRIH), 607-629 (YLCNDCGMTFSHFTSVIYHQRLH), 635-657 (YKCNQCEKAFPTHSLLSRHQRIH), 663-685 (YKCKECGKSFSQSSSLNEHHRIH), 691-713 (YECNYCGATFSRSSILVEHLKIH), and 719-741 (YECNECEKTFKSNSGLIRHRGFH).

This sequence belongs to the krueppel C2H2-type zinc-finger protein family.

It is found in the nucleus. Functionally, may be involved in transcriptional regulation. This is Zinc finger protein 483 (ZNF483) from Homo sapiens (Human).